A 131-amino-acid chain; its full sequence is Rhodopsin (131 aa).

Over 1-16 the chain is Extracellular; it reads CGIDYYTRAPGYNNES. N-linked (GlcNAc...) asparagine glycosylation occurs at Asn14. The helical transmembrane segment at 17 to 38 threads the bilayer; that stretch reads FVIYMFIVHFLIPLFIISFCYG. The Cytoplasmic portion of the chain corresponds to 39–66; that stretch reads NLLCAVKAAAAAQEESETTQRAEREVTR. The chain crosses the membrane as a helical span at residues 67 to 88; sequence MVIMMVISYLVSWVPYASVAWY. Topologically, residues 89 to 100 are extracellular; it reads IFSNQGSEFGPV. The helical transmembrane segment at 101–122 threads the bilayer; the sequence is FMTIPAFFAKSSALYNPLIYVL. Lys110 is modified (N6-(retinylidene)lysine). The Cytoplasmic portion of the chain corresponds to 123–131; it reads MNKQFRHCM.

The protein belongs to the G-protein coupled receptor 1 family. Opsin subfamily. In terms of processing, phosphorylated on some or all of the serine and threonine residues present in the C-terminal region. Contains one covalently linked retinal chromophore.

It localises to the membrane. The protein localises to the cell projection. Its subcellular location is the cilium. It is found in the photoreceptor outer segment. Photoreceptor required for image-forming vision at low light intensity. While most salt water fish species use retinal as chromophore, most freshwater fish use 3-dehydroretinal, or a mixture of retinal and 3-dehydroretinal. Light-induced isomerization of 11-cis to all-trans retinal triggers a conformational change that activates signaling via G-proteins. Subsequent receptor phosphorylation mediates displacement of the bound G-protein alpha subunit by arrestin and terminates signaling. This chain is Rhodopsin (rho), found in Coregonus autumnalis (Arctic cisco).